The following is a 204-amino-acid chain: Ribosomal RNA small subunit methyltransferase G (204 aa).

Gly73, Phe78, and Arg139 together coordinate S-adenosyl-L-methionine.

Belongs to the methyltransferase superfamily. RNA methyltransferase RsmG family.

Its subcellular location is the cytoplasm. The catalysed reaction is guanosine(527) in 16S rRNA + S-adenosyl-L-methionine = N(7)-methylguanosine(527) in 16S rRNA + S-adenosyl-L-homocysteine. Its function is as follows. Specifically methylates the N7 position of guanine in position 527 of 16S rRNA. The sequence is that of Ribosomal RNA small subunit methyltransferase G from Coxiella burnetii (strain Dugway 5J108-111).